Reading from the N-terminus, the 500-residue chain is Lysine--tRNA ligase (500 aa).

The Mg(2+) site is built by Glu-402 and Glu-409.

It belongs to the class-II aminoacyl-tRNA synthetase family. As to quaternary structure, homodimer. The cofactor is Mg(2+).

The protein localises to the cytoplasm. It carries out the reaction tRNA(Lys) + L-lysine + ATP = L-lysyl-tRNA(Lys) + AMP + diphosphate. This is Lysine--tRNA ligase from Buchnera aphidicola subsp. Baizongia pistaciae (strain Bp).